Consider the following 199-residue polypeptide: DnaJ homolog subfamily C member 5B (199 aa).

A phosphoserine mark is found at Ser-14 and Ser-16. A J domain is found at 19–84; it reads ALYEILGLQK…SKRNIYDKYG (66 aa).

In terms of assembly, interacts with the chaperone complex consisting of HSC70 and SGTA. Post-translationally, palmitoylated.

It is found in the membrane. In Ailuropoda melanoleuca (Giant panda), this protein is DnaJ homolog subfamily C member 5B (DNAJC5B).